The sequence spans 320 residues: Solute carrier family 35 member B1 (320 aa).

8 consecutive transmembrane segments (helical) span residues 9–29, 49–69, 81–103, 134–154, 166–186, 202–222, 241–261, and 283–303; these read GLRLLVCFLGVFVCYFYYGIL, FALSLVFVQCIVNALFAKLLI, QSWLYSACSLSYLGAMVSSNSAL, YPLTKYLCVLLIVFGVALFMY, TVGYGELLLLLSLTLDGLTGV, MMLSINLWSSLFLGAGIVLTG, IVLFSLTSALGQTFIFMTVVY, and VILFSNPISSIQWVGTLLVFL. Positions 316 to 320 match the Di-lysine motif motif; the sequence is KKPSH.

Belongs to the nucleotide-sugar transporter family. SLC35B subfamily.

It localises to the endoplasmic reticulum membrane. Probable sugar transporter. This chain is Solute carrier family 35 member B1 (slc35b1), found in Xenopus laevis (African clawed frog).